Here is a 319-residue protein sequence, read N- to C-terminus: Ribosomal protein L11 methyltransferase (319 aa).

Thr-165, Gly-186, Asp-208, and Asn-251 together coordinate S-adenosyl-L-methionine.

Belongs to the methyltransferase superfamily. PrmA family.

The protein resides in the cytoplasm. The enzyme catalyses L-lysyl-[protein] + 3 S-adenosyl-L-methionine = N(6),N(6),N(6)-trimethyl-L-lysyl-[protein] + 3 S-adenosyl-L-homocysteine + 3 H(+). Its function is as follows. Methylates ribosomal protein L11. This is Ribosomal protein L11 methyltransferase from Limosilactobacillus reuteri subsp. reuteri (strain JCM 1112) (Lactobacillus reuteri).